The sequence spans 179 residues: Large ribosomal subunit protein uL5 (179 aa).

Belongs to the universal ribosomal protein uL5 family. Part of the 50S ribosomal subunit; part of the 5S rRNA/L5/L18/L25 subcomplex. Contacts the 5S rRNA and the P site tRNA. Forms a bridge to the 30S subunit in the 70S ribosome.

In terms of biological role, this is one of the proteins that bind and probably mediate the attachment of the 5S RNA into the large ribosomal subunit, where it forms part of the central protuberance. In the 70S ribosome it contacts protein S13 of the 30S subunit (bridge B1b), connecting the 2 subunits; this bridge is implicated in subunit movement. Contacts the P site tRNA; the 5S rRNA and some of its associated proteins might help stabilize positioning of ribosome-bound tRNAs. The polypeptide is Large ribosomal subunit protein uL5 (Photobacterium profundum (strain SS9)).